Reading from the N-terminus, the 562-residue chain is Urocanate hydratase (562 aa).

NAD(+)-binding positions include Gly52–Gly53, Gln130, Gly176–Gly178, Glu196, Arg201, Asn242–Ala243, Gln263–His267, Tyr273–Leu274, and Tyr322. Residue Cys410 is part of the active site. An NAD(+)-binding site is contributed by Gly492.

The protein belongs to the urocanase family. NAD(+) is required as a cofactor.

The protein localises to the cytoplasm. The enzyme catalyses 4-imidazolone-5-propanoate = trans-urocanate + H2O. Its pathway is amino-acid degradation; L-histidine degradation into L-glutamate; N-formimidoyl-L-glutamate from L-histidine: step 2/3. Functionally, catalyzes the conversion of urocanate to 4-imidazolone-5-propionate. The polypeptide is Urocanate hydratase (Klebsiella pneumoniae subsp. pneumoniae (strain ATCC 700721 / MGH 78578)).